The chain runs to 49 residues: Large ribosomal subunit protein bL33 (49 aa).

This sequence belongs to the bacterial ribosomal protein bL33 family.

The sequence is that of Large ribosomal subunit protein bL33 (rpmG) from Thermotoga maritima (strain ATCC 43589 / DSM 3109 / JCM 10099 / NBRC 100826 / MSB8).